The following is an 828-amino-acid chain: Periplasmic nitrate reductase (828 aa).

The tat-type signal signal peptide spans 1–31 (MKLSRRSFMKANAVAAAAAAAGLSVPGVARA). The 4Fe-4S Mo/W bis-MGD-type domain occupies 39 to 95 (IKWDKAPCRFCGTGCGVLVGTQQGRIVACQGDPDAPVNRGLNCIKGYFLPKIMYGKD). The [4Fe-4S] cluster site is built by Cys-46, Cys-49, Cys-53, and Cys-81. Residues Lys-83, Gln-150, Asn-175, Cys-179, 212–219 (WGSNMAEM), 243–247 (STFQH), 262–264 (QSD), Met-372, Gln-376, Asn-482, 508–509 (SD), Lys-531, Asp-558, and 718–727 (TGRVLEHWHT) each bind Mo-bis(molybdopterin guanine dinucleotide). A substrate-binding site is contributed by Phe-794. Asn-802 and Lys-819 together coordinate Mo-bis(molybdopterin guanine dinucleotide).

Belongs to the prokaryotic molybdopterin-containing oxidoreductase family. NasA/NapA/NarB subfamily. In terms of assembly, component of the periplasmic nitrate reductase NapAB complex composed of NapA and NapB. The cofactor is [4Fe-4S] cluster. Mo-bis(molybdopterin guanine dinucleotide) is required as a cofactor. Post-translationally, predicted to be exported by the Tat system. The position of the signal peptide cleavage has not been experimentally proven.

Its subcellular location is the periplasm. It catalyses the reaction 2 Fe(II)-[cytochrome] + nitrate + 2 H(+) = 2 Fe(III)-[cytochrome] + nitrite + H2O. Its function is as follows. Catalytic subunit of the periplasmic nitrate reductase complex NapAB. Receives electrons from NapB and catalyzes the reduction of nitrate to nitrite. The chain is Periplasmic nitrate reductase from Citrobacter koseri (strain ATCC BAA-895 / CDC 4225-83 / SGSC4696).